The primary structure comprises 360 residues: Peptide chain release factor 1 (360 aa).

N5-methylglutamine is present on Gln-235.

Belongs to the prokaryotic/mitochondrial release factor family. In terms of processing, methylated by PrmC. Methylation increases the termination efficiency of RF1.

It localises to the cytoplasm. Functionally, peptide chain release factor 1 directs the termination of translation in response to the peptide chain termination codons UAG and UAA. This chain is Peptide chain release factor 1, found in Cupriavidus pinatubonensis (strain JMP 134 / LMG 1197) (Cupriavidus necator (strain JMP 134)).